The primary structure comprises 211 residues: 5,6-dimethylbenzimidazole synthase (211 aa).

FMN-binding positions include 22-26 (RRDVR), Ser-50, Leu-99, and Ser-158.

The protein belongs to the BluB family. In terms of assembly, homooctamer.

The enzyme catalyses FMNH2 + O2 = dialurate + 5,6-dimethylbenzimidazole + D-erythrose 4-phosphate + H(+). Functionally, involved in the biosynthesis of cobalamin (vitamin B12). Catalyzes the oxidative fragmentation and contraction of the isoalloxazine heterocycle and the cleavage of the ribityl tail of FMNH(2) to form 5,6-dimethylbenzimidazole (DMB) and D-erythrose 4-phosphate (E4P). NAD(P)H is only required initially to reduce FMN and oxygen drives the oxidative fragmentation. This is 5,6-dimethylbenzimidazole synthase from Rhodospirillum rubrum (strain ATCC 11170 / ATH 1.1.1 / DSM 467 / LMG 4362 / NCIMB 8255 / S1).